Reading from the N-terminus, the 247-residue chain is ATP synthase subunit a (247 aa).

The next 6 helical transmembrane spans lie at 24 to 44 (IAFT…SLLM), 82 to 102 (FFPF…VGII), 112 to 132 (IIVT…YGFY), 141 to 161 (LFVP…IEVI), 194 to 214 (MLGA…ALVV), and 219 to 239 (LELL…CIYI).

Belongs to the ATPase A chain family. F-type ATPases have 2 components, CF(1) - the catalytic core - and CF(0) - the membrane proton channel. CF(1) has five subunits: alpha(3), beta(3), gamma(1), delta(1), epsilon(1). CF(0) has three main subunits: a(1), b(2) and c(9-12). The alpha and beta chains form an alternating ring which encloses part of the gamma chain. CF(1) is attached to CF(0) by a central stalk formed by the gamma and epsilon chains, while a peripheral stalk is formed by the delta and b chains.

It localises to the cell inner membrane. Key component of the proton channel; it plays a direct role in the translocation of protons across the membrane. The chain is ATP synthase subunit a from Nitrobacter winogradskyi (strain ATCC 25391 / DSM 10237 / CIP 104748 / NCIMB 11846 / Nb-255).